The primary structure comprises 388 residues: Chorismate synthase (388 aa).

Residues arginine 39 and arginine 45 each coordinate NADP(+). Residues arginine 130–serine 132, asparagine 251–alanine 252, glycine 296, lysine 311–threonine 315, and arginine 337 each bind FMN.

It belongs to the chorismate synthase family. Homotetramer. FMNH2 serves as cofactor.

The catalysed reaction is 5-O-(1-carboxyvinyl)-3-phosphoshikimate = chorismate + phosphate. The protein operates within metabolic intermediate biosynthesis; chorismate biosynthesis; chorismate from D-erythrose 4-phosphate and phosphoenolpyruvate: step 7/7. Catalyzes the anti-1,4-elimination of the C-3 phosphate and the C-6 proR hydrogen from 5-enolpyruvylshikimate-3-phosphate (EPSP) to yield chorismate, which is the branch point compound that serves as the starting substrate for the three terminal pathways of aromatic amino acid biosynthesis. This reaction introduces a second double bond into the aromatic ring system. This is Chorismate synthase from Streptococcus pyogenes serotype M6 (strain ATCC BAA-946 / MGAS10394).